A 223-amino-acid polypeptide reads, in one-letter code: Guanylate kinase (223 aa).

Positions 6-183 (GRLFVMTGAS…AVADFLAILT (178 aa)) constitute a Guanylate kinase-like domain. An ATP-binding site is contributed by 13–20 (GASGVGKG).

Belongs to the guanylate kinase family.

It localises to the cytoplasm. It catalyses the reaction GMP + ATP = GDP + ADP. In terms of biological role, essential for recycling GMP and indirectly, cGMP. This chain is Guanylate kinase, found in Thermus thermophilus (strain ATCC 27634 / DSM 579 / HB8).